The following is an 87-amino-acid chain: Large ribosomal subunit protein bL27 (87 aa).

The tract at residues 1–25 (MAHKKGASSSRNGRDSNAQRLGVKR) is disordered. The segment covering 7 to 19 (ASSSRNGRDSNAQ) has biased composition (polar residues).

It belongs to the bacterial ribosomal protein bL27 family.

The chain is Large ribosomal subunit protein bL27 from Rhodococcus opacus (strain B4).